The following is a 128-amino-acid chain: uncharacterized protein (128 aa).

The HTH hxlR-type domain maps to 18–116; the sequence is CPVETTLDII…WGEKYKDRID (99 aa).

This is an uncharacterized protein from Bacillus subtilis (strain 168).